The chain runs to 314 residues: tRNA-cytidine(32) 2-sulfurtransferase (314 aa).

Residues 46–51 (SGGKDS) carry the PP-loop motif motif. Residues Cys-121, Cys-124, and Cys-212 each coordinate [4Fe-4S] cluster.

This sequence belongs to the TtcA family. As to quaternary structure, homodimer. Mg(2+) is required as a cofactor. Requires [4Fe-4S] cluster as cofactor.

It is found in the cytoplasm. It carries out the reaction cytidine(32) in tRNA + S-sulfanyl-L-cysteinyl-[cysteine desulfurase] + AH2 + ATP = 2-thiocytidine(32) in tRNA + L-cysteinyl-[cysteine desulfurase] + A + AMP + diphosphate + H(+). It functions in the pathway tRNA modification. In terms of biological role, catalyzes the ATP-dependent 2-thiolation of cytidine in position 32 of tRNA, to form 2-thiocytidine (s(2)C32). The sulfur atoms are provided by the cysteine/cysteine desulfurase (IscS) system. The polypeptide is tRNA-cytidine(32) 2-sulfurtransferase (Nitrosomonas europaea (strain ATCC 19718 / CIP 103999 / KCTC 2705 / NBRC 14298)).